Here is a 237-residue protein sequence, read N- to C-terminus: Probable transcriptional regulatory protein WS1016 (237 aa).

It belongs to the TACO1 family.

The protein localises to the cytoplasm. This is Probable transcriptional regulatory protein WS1016 from Wolinella succinogenes (strain ATCC 29543 / DSM 1740 / CCUG 13145 / JCM 31913 / LMG 7466 / NCTC 11488 / FDC 602W) (Vibrio succinogenes).